Consider the following 284-residue polypeptide: Bifunctional protein FolD (284 aa).

NADP(+) is bound by residues 166–168 and isoleucine 232; that span reads GAS.

It belongs to the tetrahydrofolate dehydrogenase/cyclohydrolase family. In terms of assembly, homodimer.

It catalyses the reaction (6R)-5,10-methylene-5,6,7,8-tetrahydrofolate + NADP(+) = (6R)-5,10-methenyltetrahydrofolate + NADPH. It carries out the reaction (6R)-5,10-methenyltetrahydrofolate + H2O = (6R)-10-formyltetrahydrofolate + H(+). The protein operates within one-carbon metabolism; tetrahydrofolate interconversion. Catalyzes the oxidation of 5,10-methylenetetrahydrofolate to 5,10-methenyltetrahydrofolate and then the hydrolysis of 5,10-methenyltetrahydrofolate to 10-formyltetrahydrofolate. The protein is Bifunctional protein FolD of Shewanella pealeana (strain ATCC 700345 / ANG-SQ1).